The primary structure comprises 272 residues: Orotidine 5'-phosphate decarboxylase (272 aa).

Residue Lys95 is the Proton donor of the active site.

Belongs to the OMP decarboxylase family. Type 2 subfamily.

It catalyses the reaction orotidine 5'-phosphate + H(+) = UMP + CO2. It participates in pyrimidine metabolism; UMP biosynthesis via de novo pathway; UMP from orotate: step 2/2. The sequence is that of Orotidine 5'-phosphate decarboxylase from Cupriavidus taiwanensis (strain DSM 17343 / BCRC 17206 / CCUG 44338 / CIP 107171 / LMG 19424 / R1) (Ralstonia taiwanensis (strain LMG 19424)).